Consider the following 197-residue polypeptide: Nucleoside triphosphate pyrophosphatase (197 aa).

The active-site Proton acceptor is Asp-71.

Belongs to the Maf family. A divalent metal cation serves as cofactor.

Its subcellular location is the cytoplasm. The catalysed reaction is a ribonucleoside 5'-triphosphate + H2O = a ribonucleoside 5'-phosphate + diphosphate + H(+). It carries out the reaction a 2'-deoxyribonucleoside 5'-triphosphate + H2O = a 2'-deoxyribonucleoside 5'-phosphate + diphosphate + H(+). In terms of biological role, nucleoside triphosphate pyrophosphatase. May have a dual role in cell division arrest and in preventing the incorporation of modified nucleotides into cellular nucleic acids. This chain is Nucleoside triphosphate pyrophosphatase, found in Synechococcus sp. (strain JA-2-3B'a(2-13)) (Cyanobacteria bacterium Yellowstone B-Prime).